Reading from the N-terminus, the 473-residue chain is Argininosuccinate lyase (473 aa).

This sequence belongs to the lyase 1 family. Argininosuccinate lyase subfamily.

It localises to the cytoplasm. The catalysed reaction is 2-(N(omega)-L-arginino)succinate = fumarate + L-arginine. It participates in amino-acid biosynthesis; L-arginine biosynthesis; L-arginine from L-ornithine and carbamoyl phosphate: step 3/3. The chain is Argininosuccinate lyase from Streptomyces clavuligerus.